The following is a 584-amino-acid chain: Protein phosphatase 2A scaffold subunit (584 aa).

HEAT repeat units lie at residues 7–45 (ESDD…ALGP), 46–84 (ERTR…FVGG), 86–123 (EHAV…EIPT), 168–206 (LRKT…VKSE), 207–239 (ILPL…MLTN), 240–278 (EENI…SMGT), 279–317 (EITK…LLTK), 318–356 (EMNI…IYGK), 358–395 (DTLT…VIGI), 397–434 (MLSQ…QLGV), 441–479 (LGNL…AKNN), 480–512 (IIPK…VVGG), 513–551 (DVIS…LLDS), and 553–584 (IVQS…LQLC).

It belongs to the phosphatase 2A regulatory subunit A family. Component of the Sca1 complex composed of at least gefA, gefH, scaA, phr, and the protein phosphatase 2A subunits pppA and pho2B.

It localises to the cytoplasm. It is found in the cytosol. The protein resides in the cell membrane. Scaffolding molecule which may coordinate the assembly of the catalytic subunit and a variable regulatory B subunit. Component of the Sca1 complex, a regulator of cell motility, chemotaxis and signal relay. The Sca1 complex is recruited to the plasma membrane in a chemoattractant- and F-actin-dependent manner and is enriched at the leading edge of chemotaxing cells where it regulates F-actin dynamics and signal relay by controlling the activation of rasC and the downstream target of rapamycin complex 2 (TORC2)-Akt/protein kinase B (PKB) pathway. This is Protein phosphatase 2A scaffold subunit (pppA) from Dictyostelium discoideum (Social amoeba).